Reading from the N-terminus, the 75-residue chain is DNA-directed RNA polymerase subunit omega (75 aa).

Belongs to the RNA polymerase subunit omega family. In terms of assembly, in cyanobacteria the RNAP catalytic core is composed of 2 alpha, 1 beta, 1 beta', 1 gamma and 1 omega subunit. When a sigma factor is associated with the core the holoenzyme is formed, which can initiate transcription.

It catalyses the reaction RNA(n) + a ribonucleoside 5'-triphosphate = RNA(n+1) + diphosphate. Its function is as follows. Promotes RNA polymerase assembly. Latches the N- and C-terminal regions of the beta' subunit thereby facilitating its interaction with the beta and alpha subunits. The sequence is that of DNA-directed RNA polymerase subunit omega from Parasynechococcus marenigrum (strain WH8102).